The sequence spans 270 residues: MSNKVHLGHTARKRFGQNFLTDENVINRIVGAISPDNEHVMVEIGPGLAALTEPVASGIDKLTVVELDKDLVERLKTHPTLKDKLEIHQGDALNFDFKQLVREDMQMKVFGNLPYNISTPLMFHLFEFAQYIENMHFMLQKEVVLRLSASPGTKAYGRLTVMAQYHCQVMPVLEVPPGCFTPPPKVDSAVVRLVPYKTKPFPCKDVEVLRHLTTTAFNMRRKTLRNNLKHMLSDDEFAQLEIDSTLRPEQISVQQYVAMANLFIDKQTKS.

6 residues coordinate S-adenosyl-L-methionine: Asn-18, Leu-20, Gly-45, Glu-66, Asp-91, and Asn-112.

Belongs to the class I-like SAM-binding methyltransferase superfamily. rRNA adenine N(6)-methyltransferase family. RsmA subfamily.

The protein localises to the cytoplasm. It carries out the reaction adenosine(1518)/adenosine(1519) in 16S rRNA + 4 S-adenosyl-L-methionine = N(6)-dimethyladenosine(1518)/N(6)-dimethyladenosine(1519) in 16S rRNA + 4 S-adenosyl-L-homocysteine + 4 H(+). Its function is as follows. Specifically dimethylates two adjacent adenosines (A1518 and A1519) in the loop of a conserved hairpin near the 3'-end of 16S rRNA in the 30S particle. May play a critical role in biogenesis of 30S subunits. This chain is Ribosomal RNA small subunit methyltransferase A, found in Shewanella piezotolerans (strain WP3 / JCM 13877).